A 530-amino-acid polypeptide reads, in one-letter code: Putative ABC transporter ATP-binding protein SSO1893 (530 aa).

ABC transporter domains follow at residues 6 to 243 (IRDL…LGLE) and 282 to 516 (ILFA…EPPL). ATP contacts are provided by residues 38–45 (GRSGSGKS) and 314–321 (GKNGSGKT).

It belongs to the ABC transporter superfamily.

The protein resides in the cell membrane. In terms of biological role, probably part of an ABC transporter complex. Responsible for energy coupling to the transport system. This Saccharolobus solfataricus (strain ATCC 35092 / DSM 1617 / JCM 11322 / P2) (Sulfolobus solfataricus) protein is Putative ABC transporter ATP-binding protein SSO1893.